The chain runs to 144 residues: Large ribosomal subunit protein uL15 (144 aa).

The disordered stretch occupies residues methionine 1–phenylalanine 50. The segment covering arginine 21–phenylalanine 50 has biased composition (gly residues).

The protein belongs to the universal ribosomal protein uL15 family. In terms of assembly, part of the 50S ribosomal subunit.

Binds to the 23S rRNA. The protein is Large ribosomal subunit protein uL15 of Tolumonas auensis (strain DSM 9187 / NBRC 110442 / TA 4).